Here is a 359-residue protein sequence, read N- to C-terminus: S-adenosylmethionine:tRNA ribosyltransferase-isomerase (359 aa).

It belongs to the QueA family. Monomer.

The protein localises to the cytoplasm. The catalysed reaction is 7-aminomethyl-7-carbaguanosine(34) in tRNA + S-adenosyl-L-methionine = epoxyqueuosine(34) in tRNA + adenine + L-methionine + 2 H(+). It participates in tRNA modification; tRNA-queuosine biosynthesis. Transfers and isomerizes the ribose moiety from AdoMet to the 7-aminomethyl group of 7-deazaguanine (preQ1-tRNA) to give epoxyqueuosine (oQ-tRNA). This chain is S-adenosylmethionine:tRNA ribosyltransferase-isomerase, found in Alcanivorax borkumensis (strain ATCC 700651 / DSM 11573 / NCIMB 13689 / SK2).